Here is an 88-residue protein sequence, read N- to C-terminus: Gene 86 protein (88 aa).

The segment at 64–88 (WRGNPSAYDDEVGDLEGFETQHSDY) is disordered. A compositionally biased stretch (acidic residues) spans 71–80 (YDDEVGDLEG).

The chain is Gene 86 protein (86) from Mycobacterium (Mycobacteriophage L5).